The primary structure comprises 514 residues: 2,3-bisphosphoglycerate-independent phosphoglycerate mutase (514 aa).

Mn(2+) is bound by residues Asp14 and Ser64. Ser64 (phosphoserine intermediate) is an active-site residue. Substrate is bound by residues His125, 155–156 (RD), Arg187, Arg193, 263–266 (RADR), and Lys336. Mn(2+) contacts are provided by Asp403, His407, Asp444, His445, and His463.

The protein belongs to the BPG-independent phosphoglycerate mutase family. As to quaternary structure, monomer. Mn(2+) is required as a cofactor.

The catalysed reaction is (2R)-2-phosphoglycerate = (2R)-3-phosphoglycerate. Its pathway is carbohydrate degradation; glycolysis; pyruvate from D-glyceraldehyde 3-phosphate: step 3/5. Catalyzes the interconversion of 2-phosphoglycerate and 3-phosphoglycerate. This chain is 2,3-bisphosphoglycerate-independent phosphoglycerate mutase, found in Enterobacter sp. (strain 638).